Here is a 382-residue protein sequence, read N- to C-terminus: Pyrimidine monooxygenase RutA (382 aa).

FMN-binding positions include 68–69 (IK), Asn-134, Glu-143, 159–160 (RY), and Ser-209.

This sequence belongs to the NtaA/SnaA/DszA monooxygenase family. RutA subfamily.

It catalyses the reaction uracil + FMNH2 + NADH + O2 = (Z)-3-ureidoacrylate + FMN + NAD(+) + H2O + H(+). The enzyme catalyses thymine + FMNH2 + NADH + O2 = (Z)-2-methylureidoacrylate + FMN + NAD(+) + H2O + H(+). Functionally, catalyzes the pyrimidine ring opening between N-3 and C-4 by an unusual flavin hydroperoxide-catalyzed mechanism, adding oxygen atoms in the process to yield ureidoacrylate peracid, that immediately reacts with FMN forming ureidoacrylate and FMN-N(5)-oxide. The FMN-N(5)-oxide reacts spontaneously with NADH to produce FMN. Requires the flavin reductase RutF to regenerate FMN in vivo. This chain is Pyrimidine monooxygenase RutA (rutA), found in Escherichia coli O157:H7.